Here is a 295-residue protein sequence, read N- to C-terminus: Small ribosomal subunit protein uS2 (295 aa).

This sequence belongs to the universal ribosomal protein uS2 family.

This is Small ribosomal subunit protein uS2 from Rickettsia canadensis (strain McKiel).